The chain runs to 123 residues: Kininogen (123 aa).

Bradykinin is released from kininogen by kallikrein. In terms of processing, N-glycosylated. Contains sulfated N-acetylglucosamine and O-acetylated sialic acids as terminal elements on biantennary and triantennary N-glycans.

Its function is as follows. Inhibits papain and ficin (cysteine proteinases) but not trypsin (a serine proteinase). This chain is Kininogen, found in Gadus morhua (Atlantic cod).